Here is a 615-residue protein sequence, read N- to C-terminus: Medium-chain acyl-CoA ligase ACSF2, mitochondrial (615 aa).

The N-terminal 41 residues, 1–41 (MAVYHGMLRFGRLCIASLGARGPRTLLSRPRPNSKLQSVRA), are a transit peptide targeting the mitochondrion. Residue K179 is modified to N6-acetyllysine. N6-acetyllysine; alternate is present on K182. The residue at position 182 (K182) is an N6-succinyllysine; alternate. N6-acetyllysine is present on K199. ATP is bound at residue 263–271 (TSGTTGNPK). K340 and K398 each carry N6-acetyllysine. The residue at position 478 (K478) is an N6-succinyllysine. Residues D493 and R508 each contribute to the ATP site. N6-acetyllysine is present on K510. K544 and K570 each carry N6-acetyllysine; alternate. Residues K544 and K570 each carry the N6-succinyllysine; alternate modification. ATP is bound at residue K599. Residue K599 is modified to N6-succinyllysine.

This sequence belongs to the ATP-dependent AMP-binding enzyme family.

The protein localises to the mitochondrion. The catalysed reaction is a medium-chain fatty acid + ATP + CoA = a medium-chain fatty acyl-CoA + AMP + diphosphate. The enzyme catalyses octanoate + ATP + CoA = octanoyl-CoA + AMP + diphosphate. In terms of biological role, acyl-CoA synthases catalyze the initial reaction in fatty acid metabolism, by forming a thioester with CoA. Has some preference toward medium-chain substrates. Plays a role in adipocyte differentiation. This chain is Medium-chain acyl-CoA ligase ACSF2, mitochondrial, found in Mus musculus (Mouse).